The following is a 630-amino-acid chain: Betaine/ectoine transporter LcoP (630 aa).

The segment covering 1-13 (MSTNSGNNLPESQ) has biased composition (polar residues). The interval 1–28 (MSTNSGNNLPESQESPEEPHYPHDTHPG) is disordered. The segment covering 17-26 (EEPHYPHDTH) has biased composition (basic and acidic residues). A run of 12 helical transmembrane segments spans residues 47–67 (TVFG…ISSP), 85–105 (TGWL…YIAF), 125–145 (FSWI…FFGP), 177–197 (FHWG…LAYS), 230–250 (MAII…AIQV), 267–287 (ILIA…VSGV), 299–319 (ISLT…LFLL), 354–374 (WTAF…MFIA), 385–405 (FALI…TIFG), 436–456 (LPLY…FFVT), 479–499 (LIVV…LLTG), and 510–530 (LTIL…IAFI). A disordered region spans residues 611-630 (WADGWTPESTEEGEVDAKKD).

This sequence belongs to the BCCT transporter (TC 2.A.15) family.

Its subcellular location is the cell membrane. Its activity is regulated as follows. Uptake is activated by hyperosmotic stress. Shows a small but significant chill stimulation around 15 degrees Celsius. In terms of biological role, involved in the uptake of osmoprotectants. Can transport betaine and ectoine. Na(+) is probably the coupling ion. The chain is Betaine/ectoine transporter LcoP from Corynebacterium glutamicum (strain ATCC 13032 / DSM 20300 / JCM 1318 / BCRC 11384 / CCUG 27702 / LMG 3730 / NBRC 12168 / NCIMB 10025 / NRRL B-2784 / 534).